The primary structure comprises 232 residues: Small ribosomal subunit protein uS3 (232 aa).

The KH type-2 domain occupies 39–107 (VRQYLTKALK…PAQINIAEVR (69 aa)).

It belongs to the universal ribosomal protein uS3 family. Part of the 30S ribosomal subunit. Forms a tight complex with proteins S10 and S14.

Functionally, binds the lower part of the 30S subunit head. Binds mRNA in the 70S ribosome, positioning it for translation. In Pseudoalteromonas atlantica (strain T6c / ATCC BAA-1087), this protein is Small ribosomal subunit protein uS3.